The following is a 109-amino-acid chain: uncharacterized protein (109 aa).

It to A.calcoaceticus putative ferredoxin.

This is an uncharacterized protein from Escherichia coli O157:H7.